A 174-amino-acid polypeptide reads, in one-letter code: Pediocin PA-1 biosynthesis protein PedC (174 aa).

Its function is as follows. Probably involved in pediocin PA-1 biosynthesis. The sequence is that of Pediocin PA-1 biosynthesis protein PedC (pedC) from Pediococcus acidilactici.